Here is a 398-residue protein sequence, read N- to C-terminus: UDP-D-apiose/UDP-D-xylose synthase (398 aa).

An NAD(+)-binding site is contributed by Asp57–Asp88. Residue Arg190 coordinates substrate. Residue Tyr193 is the Proton acceptor of the active site. Tyr193–Lys197 provides a ligand contact to NAD(+). Asn222 is a binding site for substrate. Residue Arg243 participates in NAD(+) binding. Residues Val244–Phe248, Val261–Arg268, and Asp345–Arg349 contribute to the substrate site.

It belongs to the NAD(P)-dependent epimerase/dehydratase family. As to quaternary structure, homodimer. It depends on NAD(+) as a cofactor.

It is found in the cytoplasm. In terms of biological role, catalyzes the conversion of UDP-D-glucuronate to a mixture of UDP-D-apiose and UDP-D-xylose. D-Apiose (3-C-hydroxymethyl-d-erythrose) is the only plant cell wall monosaccharide with a branched carbon skeleton and found in rhamnogalacturonan II (RG-II), apiogalacturonan, and several apioglycosides. The sequence is that of UDP-D-apiose/UDP-D-xylose synthase from Oryza sativa subsp. japonica (Rice).